Reading from the N-terminus, the 199-residue chain is Glycerol-3-phosphate acyltransferase (199 aa).

5 helical membrane passes run 4–24, 51–71, 77–97, 111–131, and 152–172; these read LVSVAILGYLLGSIPVGFLMG, WAALFTVLCDIGKGLLAAYLG, EWGFVAAGLLASLGHSYPVWL, VMLLHYPLAVLVGIAAGALAV, and LFLLDAPLSHRLLVVALAVVI.

Belongs to the PlsY family. Probably interacts with PlsX.

The protein resides in the cell membrane. The enzyme catalyses an acyl phosphate + sn-glycerol 3-phosphate = a 1-acyl-sn-glycero-3-phosphate + phosphate. It participates in lipid metabolism; phospholipid metabolism. Its function is as follows. Catalyzes the transfer of an acyl group from acyl-phosphate (acyl-PO(4)) to glycerol-3-phosphate (G3P) to form lysophosphatidic acid (LPA). This enzyme utilizes acyl-phosphate as fatty acyl donor, but not acyl-CoA or acyl-ACP. This is Glycerol-3-phosphate acyltransferase from Symbiobacterium thermophilum (strain DSM 24528 / JCM 14929 / IAM 14863 / T).